The following is a 43-amino-acid chain: Truncated K3L homolog (43 aa).

Belongs to the orthopoxvirus OPG041 family.

In Cynomys gunnisoni (Gunnison's prairie dog), this protein is Truncated K3L homolog (OPG041).